Consider the following 267-residue polypeptide: Thiazole synthase (267 aa).

The Schiff-base intermediate with DXP role is filled by K107. Residues G168, 194 to 195 (AG), and 216 to 217 (NT) contribute to the 1-deoxy-D-xylulose 5-phosphate site.

This sequence belongs to the ThiG family. In terms of assembly, homotetramer. Forms heterodimers with either ThiH or ThiS.

Its subcellular location is the cytoplasm. It catalyses the reaction [ThiS sulfur-carrier protein]-C-terminal-Gly-aminoethanethioate + 2-iminoacetate + 1-deoxy-D-xylulose 5-phosphate = [ThiS sulfur-carrier protein]-C-terminal Gly-Gly + 2-[(2R,5Z)-2-carboxy-4-methylthiazol-5(2H)-ylidene]ethyl phosphate + 2 H2O + H(+). It functions in the pathway cofactor biosynthesis; thiamine diphosphate biosynthesis. Functionally, catalyzes the rearrangement of 1-deoxy-D-xylulose 5-phosphate (DXP) to produce the thiazole phosphate moiety of thiamine. Sulfur is provided by the thiocarboxylate moiety of the carrier protein ThiS. In vitro, sulfur can be provided by H(2)S. This chain is Thiazole synthase, found in Aquifex aeolicus (strain VF5).